The primary structure comprises 414 residues: tRNA N6-adenosine threonylcarbamoyltransferase, mitochondrial (414 aa).

Residues 1–29 (MLILTKTAGVFFKPSKRKVYEFLRSFNFH) constitute a mitochondrion transit peptide. Residues Lys-74 and Lys-140 each carry the N6-acetyllysine modification. Positions 147 and 151 each coordinate a divalent metal cation. Substrate-binding positions include 169 to 173 (LISGG) and Asp-202. Lys-203 carries the post-translational modification N6-acetyllysine. Positions 222 and 226 each coordinate substrate. N6-acetyllysine is present on residues Lys-230, Lys-240, and Lys-299. Substrate is bound by residues 329–330 (SN) and Thr-357. Asp-358 is a binding site for a divalent metal cation.

Belongs to the KAE1 / TsaD family. In terms of assembly, monomer. A divalent metal cation serves as cofactor. As to expression, widely expressed, with maximum expression in pituitary gland, prostate, rectum and uterus.

It is found in the mitochondrion. It carries out the reaction L-threonylcarbamoyladenylate + adenosine(37) in tRNA = N(6)-L-threonylcarbamoyladenosine(37) in tRNA + AMP + H(+). In terms of biological role, required for the formation of a threonylcarbamoyl group on adenosine at position 37 (t(6)A37) in mitochondrial tRNAs that read codons beginning with adenine. Probably involved in the transfer of the threonylcarbamoyl moiety of threonylcarbamoyl-AMP (TC-AMP) to the N6 group of A37. Involved in mitochondrial genome maintenance. The protein is tRNA N6-adenosine threonylcarbamoyltransferase, mitochondrial of Homo sapiens (Human).